A 367-amino-acid chain; its full sequence is Nuclear hormone receptor-like 1 (367 aa).

The segment at residues 32–107 (GQPCVVCGDD…NGMTKSLVLN (76 aa)) is a DNA-binding region (nuclear receptor). 2 consecutive NR C4-type zinc fingers follow at residues 35–55 (CVVCGDDATGLHYRAITCEGC) and 71–95 (CKSIERCEISKISRNICQFCRFQKC). Residues 145–367 (EFQSRIDQVT…IANILLFKFT (223 aa)) enclose the NR LBD domain.

The protein belongs to the nuclear hormone receptor family.

It is found in the nucleus. In Onchocerca volvulus, this protein is Nuclear hormone receptor-like 1 (nhr-1).